We begin with the raw amino-acid sequence, 302 residues long: tRNA pseudouridine synthase B (302 aa).

D40 functions as the Nucleophile in the catalytic mechanism.

The protein belongs to the pseudouridine synthase TruB family. Type 1 subfamily.

It carries out the reaction uridine(55) in tRNA = pseudouridine(55) in tRNA. Functionally, responsible for synthesis of pseudouridine from uracil-55 in the psi GC loop of transfer RNAs. The protein is tRNA pseudouridine synthase B of Shouchella clausii (strain KSM-K16) (Alkalihalobacillus clausii).